Consider the following 140-residue polypeptide: ATP synthase epsilon chain (140 aa).

The protein belongs to the ATPase epsilon chain family. As to quaternary structure, F-type ATPases have 2 components, CF(1) - the catalytic core - and CF(0) - the membrane proton channel. CF(1) has five subunits: alpha(3), beta(3), gamma(1), delta(1), epsilon(1). CF(0) has three main subunits: a, b and c.

The protein resides in the cell inner membrane. In terms of biological role, produces ATP from ADP in the presence of a proton gradient across the membrane. This Bdellovibrio bacteriovorus (strain ATCC 15356 / DSM 50701 / NCIMB 9529 / HD100) protein is ATP synthase epsilon chain.